Here is a 217-residue protein sequence, read N- to C-terminus: METIWIYQFRLIVIGDSTVGKSCLLHRFTQGRFPGLRSPACDPTVGVDFFSRLLEIEPGKRIKLQLWDTAGQERFRSITRSYYRNSVGGFLVFDITNRRSFEHVKDWLEEAKMYVQPFRIVFLLVGHKCDLASQRQVTREEAEKLSADCGMKYIETSAKDATNVEESFTILTRDIYELIKKGEICIQDGWEGVKSGFVPNTVHSSEEAVKPRKECFC.

GTP is bound by residues Ser17, Gly20, Lys21, Ser22, Cys23, and Thr44. Position 22 (Ser22) interacts with Mg(2+). The segment at 39 to 47 (PACDPTVGV) is switch-I. Thr44 and Asp68 together coordinate Mg(2+). Positions 71, 127, 128, 130, 158, and 159 each coordinate GTP. Positions 71–87 (GQERFRSITRSYYRNSV) are switch-II. Residues Cys215 and Cys217 are each lipidated (S-geranylgeranyl cysteine). Cys217 is modified (cysteine methyl ester).

The protein belongs to the small GTPase superfamily. Rab family. In terms of assembly, interacts (GDP-bound) with C9orf72; C9orf72 acts as a GEF for RAB39A. Interacts (GTP-bound) with HOPS complex components VPS39 and VPS41, and STX17; interaction between HOPS components and RAB39A contributes to obtaining a functional HOPS complex that promotes membrane fusion driven by STX17-SNAP29-VAMP8. Interacts with BECN1. Probably associates with the PI3K (PI3KC3/PI3K-III/class III phosphatidylinositol 3-kinase) complex. Interacts with UACA. Interacts with isoform a of RASSF1. Does not interact with isoform c of RASSF1. Mg(2+) serves as cofactor. Post-translationally, prenylated. Prenylation is required for association with cellular membranes.

It localises to the cell membrane. Its subcellular location is the cytoplasmic vesicle. It is found in the phagosome membrane. The protein localises to the lysosome membrane. The protein resides in the autolysosome membrane. The enzyme catalyses GTP + H2O = GDP + phosphate + H(+). Its activity is regulated as follows. Regulated by guanine nucleotide exchange factors (GEFs) including c9Orf72, which promote the exchange of bound GDP for free GTP. Regulated by GTPase activating proteins (GAPs) which increase the GTP hydrolysis activity. Inhibited by GDP dissociation inhibitors (GDIs). The small GTPases Rab are key regulators of intracellular membrane trafficking, from the formation of transport vesicles to their fusion with membranes. Rabs cycle between an inactive GDP-bound form and an active GTP-bound form that is able to recruit to membranes different sets of downstream effectors directly responsible for vesicle formation, movement, tethering and fusion. RAB39A regulates autophagosome-lysosome fusion via recruitment of the HOPS endosomal tethering complex onto lysosomes; this process involves lysosomal RAB39A and autophagosomal RAB2A recruitment of HOPS subcomplexes VPS41-VPS16-VPS18-VPS33A and VPS39-VPS11, respectively, which assemble into a functional complex to mediate membrane tethering and SNAREs-driven membrane fusion. Also negatively regulates lipopolysaccharide (LPS)-induced autophagosome formation in macrophages, possibly by implicating PI3K. Promotes the delivery of MHC-I molecules from the ER to phagosomes and the generation of peptide-loaded MHC-I complexes in phagosomes, thus enhancing antigen cross-presentation by dendritic cells. Plays a role in the maturation and acidification of phagosomes that engulf pathogens, such as S.aureus and M.tuberculosis. Plays a role in the fusion of phagosomes with lysosomes. May be involved in multiple neurite formation. In Homo sapiens (Human), this protein is Ras-related protein Rab-39A.